The following is a 264-amino-acid chain: Type III pantothenate kinase 2 (264 aa).

6–13 contributes to the ATP binding site; the sequence is DVGNTFTV. Residues Tyr-100 and 107–110 contribute to the substrate site; that span reads GADR. Asp-109 functions as the Proton acceptor in the catalytic mechanism. Asp-129 is a binding site for K(+). An ATP-binding site is contributed by Thr-132. Residue Thr-184 coordinates substrate.

It belongs to the type III pantothenate kinase family. Homodimer. NH4(+) is required as a cofactor. Requires K(+) as cofactor.

It localises to the cytoplasm. The catalysed reaction is (R)-pantothenate + ATP = (R)-4'-phosphopantothenate + ADP + H(+). It participates in cofactor biosynthesis; coenzyme A biosynthesis; CoA from (R)-pantothenate: step 1/5. Functionally, catalyzes the phosphorylation of pantothenate (Pan), the first step in CoA biosynthesis. This chain is Type III pantothenate kinase 2, found in Symbiobacterium thermophilum (strain DSM 24528 / JCM 14929 / IAM 14863 / T).